A 450-amino-acid chain; its full sequence is Tubulin alpha chain (450 aa).

Gln-11 is a binding site for GTP. Residue Lys-40 is modified to N6-acetyllysine. Glu-71, Ser-140, Gly-144, Thr-145, Thr-179, Asn-206, and Asn-228 together coordinate GTP. Glu-71 lines the Mg(2+) pocket. Glu-254 is an active-site residue.

The protein belongs to the tubulin family. As to quaternary structure, dimer of alpha and beta chains. A typical microtubule is a hollow water-filled tube with an outer diameter of 25 nm and an inner diameter of 15 nM. Alpha-beta heterodimers associate head-to-tail to form protofilaments running lengthwise along the microtubule wall with the beta-tubulin subunit facing the microtubule plus end conferring a structural polarity. Microtubules usually have 13 protofilaments but different protofilament numbers can be found in some organisms and specialized cells. Requires Mg(2+) as cofactor. Post-translationally, undergoes a tyrosination/detyrosination cycle, the cyclic removal and re-addition of a C-terminal tyrosine residue by the enzymes tubulin tyrosine carboxypeptidase (TTCP) and tubulin tyrosine ligase (TTL), respectively. In terms of processing, acetylation of alpha chains at Lys-40 stabilizes microtubules and affects affinity and processivity of microtubule motors. This modification has a role in multiple cellular functions, ranging from cell motility, cell cycle progression or cell differentiation to intracellular trafficking and signaling.

It localises to the cytoplasm. The protein resides in the cytoskeleton. The catalysed reaction is GTP + H2O = GDP + phosphate + H(+). Tubulin is the major constituent of microtubules, a cylinder consisting of laterally associated linear protofilaments composed of alpha- and beta-tubulin heterodimers. Microtubules grow by the addition of GTP-tubulin dimers to the microtubule end, where a stabilizing cap forms. Below the cap, tubulin dimers are in GDP-bound state, owing to GTPase activity of alpha-tubulin. This chain is Tubulin alpha chain, found in Lepidoglyphus destructor (Storage mite).